Reading from the N-terminus, the 354-residue chain is Guanine nucleotide-binding protein G(i) subunit alpha (354 aa).

The N-myristoyl glycine moiety is linked to residue Gly-2. Cys-3 is lipidated: S-palmitoyl cysteine. The 323-residue stretch at 32 to 354 (REVKLLLLGA…KNNLKDCGLF (323 aa)) folds into the G-alpha domain. Positions 35–48 (KLLLLGAGESGKST) are G1 motif. GTP is bound by residues 40–47 (GAGESGKS), 175–181 (LRTRVKT), 200–204 (DVGGQ), 269–272 (NKKD), and Ala-326. Positions 47 and 181 each coordinate Mg(2+). A G2 motif region spans residues 173 to 181 (DVLRTRVKT). Residues 196 to 205 (FKMFDVGGQR) form a G3 motif region. The tract at residues 265–272 (ILFLNKKD) is G4 motif. Positions 324–329 (TCATDT) are G5 motif.

This sequence belongs to the G-alpha family. G(i/o/t/z) subfamily. G proteins are composed of 3 units; alpha, beta and gamma. The alpha chain contains the guanine nucleotide binding site.

In terms of biological role, guanine nucleotide-binding proteins (G proteins) are involved as modulators or transducers in various transmembrane signaling systems. The G(i) proteins are involved in hormonal regulation of adenylate cyclase: they inhibit the cyclase in response to beta-adrenergic stimuli. The polypeptide is Guanine nucleotide-binding protein G(i) subunit alpha (Lymnaea stagnalis (Great pond snail)).